The following is a 98-amino-acid chain: Integration host factor subunit alpha (98 aa).

The disordered stretch occupies residues phenylalanine 49 to aspartate 70.

This sequence belongs to the bacterial histone-like protein family. Heterodimer of an alpha and a beta chain.

Functionally, this protein is one of the two subunits of integration host factor, a specific DNA-binding protein that functions in genetic recombination as well as in transcriptional and translational control. This is Integration host factor subunit alpha from Yersinia pestis.